The chain runs to 95 residues: Aspartyl/glutamyl-tRNA(Asn/Gln) amidotransferase subunit C (95 aa).

Belongs to the GatC family. In terms of assembly, heterotrimer of A, B and C subunits.

The enzyme catalyses L-glutamyl-tRNA(Gln) + L-glutamine + ATP + H2O = L-glutaminyl-tRNA(Gln) + L-glutamate + ADP + phosphate + H(+). It catalyses the reaction L-aspartyl-tRNA(Asn) + L-glutamine + ATP + H2O = L-asparaginyl-tRNA(Asn) + L-glutamate + ADP + phosphate + 2 H(+). Allows the formation of correctly charged Asn-tRNA(Asn) or Gln-tRNA(Gln) through the transamidation of misacylated Asp-tRNA(Asn) or Glu-tRNA(Gln) in organisms which lack either or both of asparaginyl-tRNA or glutaminyl-tRNA synthetases. The reaction takes place in the presence of glutamine and ATP through an activated phospho-Asp-tRNA(Asn) or phospho-Glu-tRNA(Gln). This is Aspartyl/glutamyl-tRNA(Asn/Gln) amidotransferase subunit C from Brucella melitensis biotype 2 (strain ATCC 23457).